A 637-amino-acid polypeptide reads, in one-letter code: ATP-dependent zinc metalloprotease FtsH (637 aa).

At Met-1–Arg-6 the chain is on the cytoplasmic side. A helical membrane pass occupies residues Ser-7–Ser-27. Topologically, residues Asp-28–Thr-103 are periplasmic. Residues Phe-104–Phe-124 traverse the membrane as a helical segment. Residues Met-125–Ser-637 are Cytoplasmic-facing. An ATP-binding site is contributed by Gly-195–Thr-202. His-417 provides a ligand contact to Zn(2+). Glu-418 is a catalytic residue. Residues His-421 and Asp-495 each coordinate Zn(2+). Positions Glu-603–Ser-637 are disordered. The span at Lys-615–Ser-637 shows a compositional bias: basic and acidic residues.

It in the central section; belongs to the AAA ATPase family. The protein in the C-terminal section; belongs to the peptidase M41 family. As to quaternary structure, homohexamer. Requires Zn(2+) as cofactor.

The protein localises to the cell inner membrane. Functionally, acts as a processive, ATP-dependent zinc metallopeptidase for both cytoplasmic and membrane proteins. Plays a role in the quality control of integral membrane proteins. This chain is ATP-dependent zinc metalloprotease FtsH, found in Rickettsia conorii (strain ATCC VR-613 / Malish 7).